Consider the following 157-residue polypeptide: Phosphopantetheine adenylyltransferase (157 aa).

Thr8 is a substrate binding site. ATP contacts are provided by residues 8-9 (TF) and His16. Substrate contacts are provided by Lys40, Thr72, and Arg86. ATP is bound by residues 87–89 (GLR), Glu97, and 122–128 (YSFLSSS).

The protein belongs to the bacterial CoaD family. Homohexamer. Requires Mg(2+) as cofactor.

It localises to the cytoplasm. The enzyme catalyses (R)-4'-phosphopantetheine + ATP + H(+) = 3'-dephospho-CoA + diphosphate. Its pathway is cofactor biosynthesis; coenzyme A biosynthesis; CoA from (R)-pantothenate: step 4/5. Reversibly transfers an adenylyl group from ATP to 4'-phosphopantetheine, yielding dephospho-CoA (dPCoA) and pyrophosphate. This Prochlorococcus marinus (strain MIT 9301) protein is Phosphopantetheine adenylyltransferase.